The following is a 1642-amino-acid chain: Cortactin-binding protein 2 (1642 aa).

Disordered regions lie at residues 1-27, 203-222, 366-433, 446-471, and 491-611; these read MATD…AEAA, KKKT…RSTE, IGAS…HPGL, GSNA…SPTS, and RFTS…PSID. Residues 119–276 are a coiled coil; sequence RKMQERMSTQ…EQLKRGTDSK (158 aa). Polar residues predominate over residues 385-394; sequence GPSTGSTADL. Residues 395-407 are compositionally biased toward low complexity; it reads TSSPTPVPSTVSP. Residue arginine 491 is modified to Asymmetric dimethylarginine. Residues 497-506 are compositionally biased toward pro residues; it reads AGAPPRPGAP. Residues 576 to 586 show a composition bias toward polar residues; that stretch reads TVASPPSTLPQ. ANK repeat units follow at residues 702 to 732, 736 to 765, 769 to 798, 802 to 831, 835 to 864, and 904 to 934; these read GRPT…DINY, DGHS…QVNV, NGFT…NINH, GGQT…DRSV, DGWT…PAHG, and EGWT…EPER. The interval 1440–1469 is disordered; that stretch reads ESGAWRKVSTSPRKKSGRFSSPTWNKPDLS. Residue serine 1513 is modified to Phosphoserine. The tract at residues 1546–1642 is disordered; that stretch reads RRFDSSGNNP…NSRDLEPTQK (97 aa). 2 stretches are compositionally biased toward polar residues: residues 1552 to 1563 and 1571 to 1588; these read GNNPVFSATVNN and KEVS…SNSK. A compositionally biased stretch (low complexity) spans 1613-1627; that stretch reads SQNTKRSSSSSNTRQ.

In terms of assembly, interacts with CTTN/cortactin SH3 domain. Interacts with STRN, STRN4/zinedin and MOB4/phocein; this interactions mediate the association with the STRIPAK core complex and may regulate dendritic spine distribution of the STRIPAK complex in hippocampal neurons. Activation of glutamate receptors weakens the interaction with STRN and STRN4.

The protein localises to the cytoplasm. The protein resides in the cell cortex. It localises to the cell projection. It is found in the dendritic spine. Its function is as follows. Regulates the dendritic spine distribution of CTTN/cortactin in hippocampal neurons, and thus controls dendritic spinogenesis and dendritic spine maintenance. Associates with the striatin-interacting phosphatase and kinase (STRIPAK) core complex to regulate dendritic spine distribution of the STRIPAK complex in hippocampal neurons. The sequence is that of Cortactin-binding protein 2 (CTTNBP2) from Muntiacus reevesi (Reeves' muntjac).